A 675-amino-acid chain; its full sequence is Polyphosphate kinase (675 aa).

Asn42 is an ATP binding site. Arg372 and Arg401 together coordinate Mg(2+). His431 serves as the catalytic Phosphohistidine intermediate. Tyr464, Arg558, and His586 together coordinate ATP.

Belongs to the polyphosphate kinase 1 (PPK1) family. Mg(2+) is required as a cofactor. In terms of processing, an intermediate of this reaction is the autophosphorylated ppk in which a phosphate is covalently linked to a histidine residue through a N-P bond.

The catalysed reaction is [phosphate](n) + ATP = [phosphate](n+1) + ADP. Functionally, catalyzes the reversible transfer of the terminal phosphate of ATP to form a long-chain polyphosphate (polyP). The sequence is that of Polyphosphate kinase from Helicobacter pylori (strain ATCC 700392 / 26695) (Campylobacter pylori).